Here is a 299-residue protein sequence, read N- to C-terminus: N-carbamoylputrescine amidase (299 aa).

Residues 10 to 268 enclose the CN hydrolase domain; it reads VVVSSLQFAC…EAVLVAQFDL (259 aa). The active-site Proton acceptor is the E49. Catalysis depends on K122, which acts as the Proton donor. The active-site Nucleophile is the C159.

The protein belongs to the carbon-nitrogen hydrolase superfamily. As to quaternary structure, homooctamer (isoform 2). In terms of tissue distribution, expressed in roots, stems, leaves and flowers.

It carries out the reaction N-carbamoylputrescine + H2O + 2 H(+) = putrescine + NH4(+) + CO2. Its pathway is amine and polyamine biosynthesis; putrescine biosynthesis via agmatine pathway; putrescine from N-carbamoylputrescine (amidase route): step 1/1. Involved in polyamine biosynthesis. Catalyzes the hydrolysis of N-carbamoylputrescine to produce putrescine and ammonia. The sequence is that of N-carbamoylputrescine amidase from Arabidopsis thaliana (Mouse-ear cress).